Here is a 1355-residue protein sequence, read N- to C-terminus: Phospholipid-transporting ATPase DRS2 (1355 aa).

Residues 1-15 (MNDDRETPPKRKPGE) are compositionally biased toward basic and acidic residues. A disordered region spans residues 1 to 50 (MNDDRETPPKRKPGEDDTLFDIDFLDDTTSHSGSRSKVTNSHANANYIPP). The tract at residues 1 to 104 (MNDDRETPPK…SDAYQPQSLR (104 aa)) is involved in autoinhibition. Over 1–221 (MNDDRETPPK…TFLPKFLFQE (221 aa)) the chain is Cytoplasmic. Over residues 16 to 26 (DDTLFDIDFLD) the composition is skewed to acidic residues. Polar residues predominate over residues 30 to 44 (SHSGSRSKVTNSHAN). Ser102 is subject to Phosphoserine. Residues 222 to 242 (FSKYANLFFLCTSAIQQVPHV) form a helical membrane-spanning segment. The involved in phosphatidylserine substrate recognition stretch occupies residues 237–238 (QQ). The Lumenal segment spans residues 243–246 (SPTN). Residues 247–267 (RYTTIGTLLVVLIVSAMKECI) form a helical membrane-spanning segment. Over 268-449 (EDIKRANSDK…VEKIINRQII (182 aa)) the chain is Cytoplasmic. Residues 450–470 (ALFTVLIVLILISSIGNVIMS) traverse the membrane as a helical segment. At 471–490 (TADAKHLSYLYLEGTNKAGL) the chain is on the lumenal side. Residues 491-511 (FFKDFLTFWILFSNLVPISLF) form a helical membrane-spanning segment. Over 512–1012 (VTVELIKYYQ…WSYQRISVAI (501 aa)) the chain is Cytoplasmic. Asp560 acts as the 4-aspartylphosphate intermediate in catalysis. ATP is bound by residues Asp560, Lys561, Thr562, Glu655, Phe698, Ser700, Lys703, Lys721, Arg755, Thr756, Thr835, Gly836, Asp837, Arg928, and Lys934. Residue Asp560 participates in Mg(2+) binding. Thr562 contacts Mg(2+). Residue Asp954 participates in Mg(2+) binding. Positions 957 and 958 each coordinate ATP. Residue Asp958 coordinates Mg(2+). The chain crosses the membrane as a helical span at residues 1013-1033 (LYSFYKNTALYMTQFWYVFAN). At 1034–1043 (AFSGQSIMES) the chain is on the lumenal side. Residues 1044–1064 (WTMSFYNLFFTVWPPFVIGVF) form a helical membrane-spanning segment. The Cytoplasmic portion of the chain corresponds to 1065–1094 (DQFVSSRLLERYPQLYKLGQKGQFFSVYIF). A helical transmembrane segment spans residues 1095-1115 (WGWIINGFFHSAIVFIGTILI). Residues 1116-1131 (YRYGFALNMHGELADH) are Lumenal-facing. Residues 1132–1152 (WSWGVTVYTTSVIIVLGKAAL) traverse the membrane as a helical segment. Lys1149 serves as a coordination point for a 1,2-diacyl-sn-glycero-3-phospho-(1D-myo-inositol 4-phosphate). The Cytoplasmic portion of the chain corresponds to 1153–1161 (VTNQWTKFT). Residues 1162–1182 (LIAIPGSLLFWLIFFPIYASI) form a helical membrane-spanning segment. Residues 1183 to 1202 (FPHANISREYYGVVKHTYGS) are Lumenal-facing. A helical transmembrane segment spans residues 1203–1223 (GVFWLTLIVLPIFALVRDFLW). Residues Arg1219, Trp1223, Lys1224, Tyr1235, and His1236 each contribute to the a 1,2-diacyl-sn-glycero-3-phospho-(1D-myo-inositol 4-phosphate) site. Over 1224 to 1355 (KYYKRMYEPE…SSRDDISFDI (132 aa)) the chain is Cytoplasmic. Positions 1230-1282 (YEPETYHVIQEMQKYNISDSRPHVQQFQNAIRKVRQVQRMKKQRGFAFSQAEE) are interaction with GEA2. The tract at residues 1231–1309 (EPETYHVIQE…KYGELQDASA (79 aa)) is involved in autoinhibition. A disordered region spans residues 1305-1355 (QDASANPFNDNNGLGSNDFESAEPFIENPFADGNQNSNRFSSSRDDISFDI). Residues 1307–1323 (ASANPFNDNNGLGSNDF) are compositionally biased toward polar residues. Over residues 1346-1355 (SSRDDISFDI) the composition is skewed to basic and acidic residues.

The protein belongs to the cation transport ATPase (P-type) (TC 3.A.3) family. Type IV subfamily. Component of a flippase complex consisting of DRS2 and CDC50. Interacts with CDC50; the interaction is direct, is required for their mutual export from the endoplasmic reticulum, and preferentially occurs when DRS2 is in the E2P state. Interacts (via C-terminus) with GEA2 (via SEC7 domain); the interaction is direct. Interacts with GEA1. Mg(2+) serves as cofactor.

It localises to the golgi apparatus. The protein localises to the trans-Golgi network membrane. It is found in the endosome membrane. It catalyses the reaction ATP + H2O + phospholipidSide 1 = ADP + phosphate + phospholipidSide 2.. The catalysed reaction is a 1,2-diacyl-sn-glycero-3-phospho-L-serine(out) + ATP + H2O = a 1,2-diacyl-sn-glycero-3-phospho-L-serine(in) + ADP + phosphate + H(+). The enzyme catalyses a 1,2-diacyl-sn-glycero-3-phosphoethanolamine(out) + ATP + H2O = a 1,2-diacyl-sn-glycero-3-phosphoethanolamine(in) + ADP + phosphate + H(+). Allosterically activated by binding 1,2-diacyl-sn-glycero-3-phospho-(1D-myo-inositol 4-phosphate) (phosphatidylinositol 4-phosphate). Inhibited by orthovanadate, N-ethylmaleimide, trifluoroberyllate and tetrafluoroaluminate; orthovanadate and N-ethylmaleimide inhibit phosphorylation of the active site aspartic acid. The ATPase activity is not potently stimulated by phosphatidylinositol 3-phosphate and phosphatidylinositol 5-phosphate, phosphatidylinositol 4,5-bisphosphate or phosphatidylcholine. Not inhibited by azide. Functionally, catalytic component of a P4-ATPase flippase complex which catalyzes the hydrolysis of ATP coupled to the transport of phosphatidylserine and small amounts of ethanolamine from the lumen to the cytosolic leaflet of the trans-Golgi network and ensures the maintenance of asymmetric distribution of phospholipids. Contributes to clathrin-coated vesicle formation, endocytosis, and protein trafficking between the Golgi and endosomal system. Does not appear to transport phosphatidylcholine or sphingomyelin. This is Phospholipid-transporting ATPase DRS2 from Saccharomyces cerevisiae (strain ATCC 204508 / S288c) (Baker's yeast).